A 261-amino-acid chain; its full sequence is Shikimate dehydrogenase (NADP(+)) (261 aa).

Shikimate contacts are provided by residues 13–15 (SLS) and threonine 60. Catalysis depends on lysine 64, which acts as the Proton acceptor. NADP(+) is bound at residue glutamate 76. Shikimate-binding residues include asparagine 85 and aspartate 100. NADP(+) is bound by residues 122–126 (GAGGA), 143–148 (NRTVER), and isoleucine 203. A shikimate-binding site is contributed by tyrosine 205. Glycine 226 is an NADP(+) binding site.

Belongs to the shikimate dehydrogenase family. In terms of assembly, homodimer.

The catalysed reaction is shikimate + NADP(+) = 3-dehydroshikimate + NADPH + H(+). Its pathway is metabolic intermediate biosynthesis; chorismate biosynthesis; chorismate from D-erythrose 4-phosphate and phosphoenolpyruvate: step 4/7. Its function is as follows. Involved in the biosynthesis of the chorismate, which leads to the biosynthesis of aromatic amino acids. Catalyzes the reversible NADPH linked reduction of 3-dehydroshikimate (DHSA) to yield shikimate (SA). This chain is Shikimate dehydrogenase (NADP(+)), found in Exiguobacterium sp. (strain ATCC BAA-1283 / AT1b).